Reading from the N-terminus, the 285-residue chain is Heme oxygenase 3, chloroplastic (285 aa).

Residues 1 to 58 (MATTRLNPSCHFPASTRLSCESYLGLRTTGRISYARTLTAPRGYLAVKANGGQASVVT) constitute a chloroplast transit peptide. H89 is a binding site for heme b. Over residues 89-105 (HTKDQAREGEKESRSPE) the composition is skewed to basic and acidic residues. The disordered stretch occupies residues 89–109 (HTKDQAREGEKESRSPEEGPV).

Belongs to the heme oxygenase family. Widely expressed at low levels.

It localises to the plastid. The protein resides in the chloroplast. It catalyses the reaction heme b + 3 reduced [NADPH--hemoprotein reductase] + 3 O2 = biliverdin IXalpha + CO + Fe(2+) + 3 oxidized [NADPH--hemoprotein reductase] + 3 H2O + H(+). Functionally, catalyzes the opening of the heme ring to form the open-chain tetrapyrrole biliverdin IX with the release of iron and carbon monoxide (CO). Produces specifically the biliverdin IX-alpha isomer. Plays a minor role in phytochrome assembly and photomorphogenesis. In Arabidopsis thaliana (Mouse-ear cress), this protein is Heme oxygenase 3, chloroplastic (HO3).